The chain runs to 208 residues: Holliday junction branch migration complex subunit RuvA (208 aa).

A domain I region spans residues 1–64 (MIGKLKGIVD…EDMIRLYGFR (64 aa)). Residues 65-143 (VDAEREWFRL…AFAPIDPALI (79 aa)) form a domain II region. Positions 144 to 152 (ALTGAVEDR) are flexible linker. The segment at 153-208 (TAPQPVADAISALVNLGYAQIQASAAIAAALKGLGEEAGTVEAKTLIRLGLRELAR) is domain III.

The protein belongs to the RuvA family. In terms of assembly, homotetramer. Forms an RuvA(8)-RuvB(12)-Holliday junction (HJ) complex. HJ DNA is sandwiched between 2 RuvA tetramers; dsDNA enters through RuvA and exits via RuvB. An RuvB hexamer assembles on each DNA strand where it exits the tetramer. Each RuvB hexamer is contacted by two RuvA subunits (via domain III) on 2 adjacent RuvB subunits; this complex drives branch migration. In the full resolvosome a probable DNA-RuvA(4)-RuvB(12)-RuvC(2) complex forms which resolves the HJ.

It localises to the cytoplasm. Functionally, the RuvA-RuvB-RuvC complex processes Holliday junction (HJ) DNA during genetic recombination and DNA repair, while the RuvA-RuvB complex plays an important role in the rescue of blocked DNA replication forks via replication fork reversal (RFR). RuvA specifically binds to HJ cruciform DNA, conferring on it an open structure. The RuvB hexamer acts as an ATP-dependent pump, pulling dsDNA into and through the RuvAB complex. HJ branch migration allows RuvC to scan DNA until it finds its consensus sequence, where it cleaves and resolves the cruciform DNA. The protein is Holliday junction branch migration complex subunit RuvA of Methylorubrum extorquens (strain CM4 / NCIMB 13688) (Methylobacterium extorquens).